A 428-amino-acid polypeptide reads, in one-letter code: MKTSLFKSLYFQVLTAIAIGILLGHFYPELGAQMKPLGDAFVKLIKMIIAPVIFCTVVTGIAGMESMKAVGRTGAVALLYFEVVSTIALIIGLIIVNVMQPGAGMNVDPSTLDAKAVAIYAEQAKDQGIVAFLLDVIPGSVIGAFASGNILQVLLFAVLFGFALHRLGSKGQLIFNVIESFSQVIFGIINMIMRLAPIGAFGAMAFTIGKYGVGTLIQLGQLIICFYITCILFVVVVLGSIARATGFNIFKFIRYIREELLIVLGTSSSESALPRMLDKMEKLGCRKSVVGLVIPTGYSFNLDGTSIYLTMAAVFIAQATNTHMDIFHQITLLVVLLLSSKGAAGVTGSGFIVLAATISAVGHLPIAGLALILGIDRFMSEARALTNLIGNGVATVVVAKWVKELDHKKLDDTLNNRVPDSKTQGLSS.

The next 8 helical transmembrane spans lie at 8–28 (SLYFQVLTAIAIGILLGHFYP), 44–64 (LIKMIIAPVIFCTVVTGIAGM), 76–96 (VALLYFEVVSTIALIIGLIIV), 142–162 (IGAFASGNILQVLLFAVLFGF), 184–204 (VIFGIINMIMRLAPIGAFGAM), 222–242 (LIICFYITCILFVVVVLGSIA), 326–346 (IFHQITLLVVLLLSSKGAAGV), and 352–372 (IVLAATISAVGHLPIAGLALI).

This sequence belongs to the dicarboxylate/amino acid:cation symporter (DAACS) (TC 2.A.23) family.

Its subcellular location is the cell inner membrane. In terms of biological role, responsible for the transport of dicarboxylates such as succinate, fumarate, and malate from the periplasm across the membrane. This is C4-dicarboxylate transport protein from Enterobacter sp. (strain 638).